We begin with the raw amino-acid sequence, 146 residues long: 3-dehydroquinate dehydratase (146 aa).

The active-site Proton acceptor is Tyr-22. Residues Asn-73, His-79, and Asp-86 each coordinate substrate. The Proton donor role is filled by His-101. Substrate-binding positions include 102 to 103 (IS) and Arg-112.

This sequence belongs to the type-II 3-dehydroquinase family. In terms of assembly, homododecamer.

The catalysed reaction is 3-dehydroquinate = 3-dehydroshikimate + H2O. It functions in the pathway metabolic intermediate biosynthesis; chorismate biosynthesis; chorismate from D-erythrose 4-phosphate and phosphoenolpyruvate: step 3/7. In terms of biological role, catalyzes a trans-dehydration via an enolate intermediate. This is 3-dehydroquinate dehydratase (aroQ) from Corynebacterium pseudotuberculosis (strain C231).